The following is a 76-amino-acid chain: Small ribosomal subunit protein bS21C (76 aa).

The disordered stretch occupies residues 52 to 76 (GRQRKLARKQMQREGLLPTKPRKDK).

This sequence belongs to the bacterial ribosomal protein bS21 family.

The sequence is that of Small ribosomal subunit protein bS21C (rpsU3) from Agrobacterium fabrum (strain C58 / ATCC 33970) (Agrobacterium tumefaciens (strain C58)).